Reading from the N-terminus, the 433-residue chain is Probable M18 family aminopeptidase 2 (433 aa).

Residues H79, H153, and H404 each contribute to the Zn(2+) site.

The protein belongs to the peptidase M18 family. Zn(2+) serves as cofactor.

The sequence is that of Probable M18 family aminopeptidase 2 from Mycobacterium tuberculosis (strain ATCC 25177 / H37Ra).